Consider the following 155-residue polypeptide: MGVQKSEVETTSSVSAEKLFKGLCLDIDTLLPQVLPGAIKSSETLEGDGGVGTVKLVHLGDASPFKTMKQKVDAIDKATFTYSYSIIDGDILLGFIESINNHFTAVPNADGGCTVKSTIIFNTKGDAVVPEENIKFANDQNLTIFKAVEAYLIAN.

The protein belongs to the BetVI family.

The polypeptide is Pathogenesis-related protein A (PCPR1-1) (Petroselinum crispum (Parsley)).